Consider the following 95-residue polypeptide: Small ribosomal subunit protein bS6 (95 aa).

Belongs to the bacterial ribosomal protein bS6 family.

Its function is as follows. Binds together with bS18 to 16S ribosomal RNA. The chain is Small ribosomal subunit protein bS6 from Exiguobacterium sp. (strain ATCC BAA-1283 / AT1b).